The sequence spans 220 residues: Ribose-5-phosphate isomerase A (220 aa).

Substrate is bound by residues 28 to 31 (TGST), 81 to 84 (DGAD), and 94 to 97 (KGGG). The active-site Proton acceptor is Glu103. Substrate is bound at residue Lys121.

This sequence belongs to the ribose 5-phosphate isomerase family. Homodimer.

The catalysed reaction is aldehydo-D-ribose 5-phosphate = D-ribulose 5-phosphate. It participates in carbohydrate degradation; pentose phosphate pathway; D-ribose 5-phosphate from D-ribulose 5-phosphate (non-oxidative stage): step 1/1. Catalyzes the reversible conversion of ribose-5-phosphate to ribulose 5-phosphate. In Coxiella burnetii (strain CbuK_Q154) (Coxiella burnetii (strain Q154)), this protein is Ribose-5-phosphate isomerase A.